Here is a 216-residue protein sequence, read N- to C-terminus: uncharacterized protein (216 aa).

This is an uncharacterized protein from Acanthamoeba polyphaga mimivirus (APMV).